We begin with the raw amino-acid sequence, 107 residues long: Latency-related protein 2 (107 aa).

The segment covering 1-44 has biased composition (pro residues); sequence MAPPLPRTPTPTHPHSHAPPLPRTPTPAHPHSHAPPLPRTPTPT. Residues 1-63 form a disordered region; sequence MAPPLPRTPT…SIQHRQGKDT (63 aa). Tandem repeats lie at residues 2–17, 18–33, and 34–49. A 3 X 17 AA tandem repeats region spans residues 2 to 49; the sequence is APPLPRTPTPTHPHSHAPPLPRTPTPAHPHSHAPPLPRTPTPTHPHSH. Residues 46-58 show a composition bias toward basic residues; it reads PHSHAPPRSIQHR.

This Homo sapiens (Human) protein is Latency-related protein 2.